A 521-amino-acid chain; its full sequence is MRRFYRGIFIVWVALRYGLDELVLTSFQKPWLRVVARIVSIGRNLDAPRGQRLREALERLGPIFVKFGQVLSTRRDLLPPDIADELAFLQDRVPPFPSAVAIATIERAFRRPVGDVFVQFDETPIASASIAQVHFATIRTDEGEVREVAVKVLRPSMRGVIEKDLALMAMMAGWVEKLSPDGKRLKPREVVGEFDKYLHDELDLVREAANAAQLRRNMASLELVLIPEMFWDFCHPEVIVMERMNGVPIAQLDRLRAAGVDIPKLARDGVTIFFTQVFRDGFFHADMHPGNIQVSLAPETFGRYISLDFGIIGTLTESDKEYLAQNFVAFFRRDYKRVAELHLESGWVPEGTRIDELEGAIRTVCEPYFDRPLKEISLGMVLMRLFQTSRRFHVEIQPQLVLLQKTLLNIEGLGRQLDPELDLWHTAKPFLEKWMVDQIGPKKLFQQLKAEAPRYAKLLPELPRLLHDFLENRPADHRRELLELLAAQKRTNRLLQTIIYGGIGFVLGLLAMQLLVRVRLF.

Residues 119–497 (QFDETPIASA…QKRTNRLLQT (379 aa)) form the Protein kinase domain. ATP contacts are provided by residues 125–133 (IASASIAQV) and lysine 151. The Proton acceptor role is filled by aspartate 286. A helical transmembrane segment spans residues 496 to 516 (QTIIYGGIGFVLGLLAMQLLV).

It belongs to the ABC1 family. UbiB subfamily.

It is found in the cell inner membrane. It participates in cofactor biosynthesis; ubiquinone biosynthesis [regulation]. Functionally, is probably a protein kinase regulator of UbiI activity which is involved in aerobic coenzyme Q (ubiquinone) biosynthesis. This chain is Probable protein kinase UbiB, found in Variovorax paradoxus (strain S110).